Here is an 87-residue protein sequence, read N- to C-terminus: Small ribosomal subunit protein uS17 (87 aa).

Belongs to the universal ribosomal protein uS17 family. In terms of assembly, part of the 30S ribosomal subunit.

Functionally, one of the primary rRNA binding proteins, it binds specifically to the 5'-end of 16S ribosomal RNA. The polypeptide is Small ribosomal subunit protein uS17 (Lacticaseibacillus casei (strain BL23) (Lactobacillus casei)).